Here is a 125-residue protein sequence, read N- to C-terminus: Holo-[acyl-carrier-protein] synthase (125 aa).

Mg(2+) contacts are provided by Asp8 and Glu57.

Belongs to the P-Pant transferase superfamily. AcpS family. Mg(2+) serves as cofactor.

Its subcellular location is the cytoplasm. The enzyme catalyses apo-[ACP] + CoA = holo-[ACP] + adenosine 3',5'-bisphosphate + H(+). Transfers the 4'-phosphopantetheine moiety from coenzyme A to a Ser of acyl-carrier-protein. This is Holo-[acyl-carrier-protein] synthase from Neisseria gonorrhoeae (strain ATCC 700825 / FA 1090).